We begin with the raw amino-acid sequence, 105 residues long: UPF0122 protein OB1530 (105 aa).

Belongs to the UPF0122 family.

Its function is as follows. Might take part in the signal recognition particle (SRP) pathway. This is inferred from the conservation of its genetic proximity to ftsY/ffh. May be a regulatory protein. The protein is UPF0122 protein OB1530 of Oceanobacillus iheyensis (strain DSM 14371 / CIP 107618 / JCM 11309 / KCTC 3954 / HTE831).